The sequence spans 1433 residues: DNA-directed RNA polymerase subunit beta' (1433 aa).

The Zn(2+) site is built by Cys-66, Cys-68, Cys-81, and Cys-84. Asp-474, Asp-476, and Asp-478 together coordinate Mg(2+). Zn(2+) contacts are provided by Cys-823, Cys-897, Cys-904, and Cys-907.

Belongs to the RNA polymerase beta' chain family. In terms of assembly, the RNAP catalytic core consists of 2 alpha, 1 beta, 1 beta' and 1 omega subunit. When a sigma factor is associated with the core the holoenzyme is formed, which can initiate transcription. Requires Mg(2+) as cofactor. It depends on Zn(2+) as a cofactor.

It carries out the reaction RNA(n) + a ribonucleoside 5'-triphosphate = RNA(n+1) + diphosphate. In terms of biological role, DNA-dependent RNA polymerase catalyzes the transcription of DNA into RNA using the four ribonucleoside triphosphates as substrates. This chain is DNA-directed RNA polymerase subunit beta', found in Amoebophilus asiaticus (strain 5a2).